The following is a 120-amino-acid chain: MMAEAKTGAKATKSAAAGAADGASKEKGPKHTPSPPKPSGRRKTRIGYVVSDKMQKTIVVELEDRVRHPLYGKIIRTTKKVKVHDEHSAAGIGDRVSLMETRPLSATKRWRLVEILEKAK.

A compositionally biased stretch (low complexity) spans Met1–Gly22. Positions Met1–Ile46 are disordered.

The protein belongs to the universal ribosomal protein uS17 family. As to quaternary structure, part of the 30S ribosomal subunit.

In terms of biological role, one of the primary rRNA binding proteins, it binds specifically to the 5'-end of 16S ribosomal RNA. This is Small ribosomal subunit protein uS17 from Mycobacterium ulcerans (strain Agy99).